The following is a 355-amino-acid chain: UDP-N-acetylglucosamine--N-acetylmuramyl-(pentapeptide) pyrophosphoryl-undecaprenol N-acetylglucosamine transferase (355 aa).

Residues 15–17, asparagine 127, arginine 163, serine 191, isoleucine 244, 263–268, and glutamine 288 contribute to the UDP-N-acetyl-alpha-D-glucosamine site; these read TGG and ALTVSE.

This sequence belongs to the glycosyltransferase 28 family. MurG subfamily.

It is found in the cell inner membrane. The enzyme catalyses di-trans,octa-cis-undecaprenyl diphospho-N-acetyl-alpha-D-muramoyl-L-alanyl-D-glutamyl-meso-2,6-diaminopimeloyl-D-alanyl-D-alanine + UDP-N-acetyl-alpha-D-glucosamine = di-trans,octa-cis-undecaprenyl diphospho-[N-acetyl-alpha-D-glucosaminyl-(1-&gt;4)]-N-acetyl-alpha-D-muramoyl-L-alanyl-D-glutamyl-meso-2,6-diaminopimeloyl-D-alanyl-D-alanine + UDP + H(+). It participates in cell wall biogenesis; peptidoglycan biosynthesis. Cell wall formation. Catalyzes the transfer of a GlcNAc subunit on undecaprenyl-pyrophosphoryl-MurNAc-pentapeptide (lipid intermediate I) to form undecaprenyl-pyrophosphoryl-MurNAc-(pentapeptide)GlcNAc (lipid intermediate II). This chain is UDP-N-acetylglucosamine--N-acetylmuramyl-(pentapeptide) pyrophosphoryl-undecaprenol N-acetylglucosamine transferase, found in Escherichia coli O9:H4 (strain HS).